The following is a 306-amino-acid chain: MWKRWLALALVAVAWVRAEEELRSKSKICANVFCGAGRECAVTEKGEPTCLCIEQCKPHKRPVCGSNGKTYLNHCELHRDACLTGSKIQVDYDGHCKEKKSVSPSASPVVCYQSNRDELRRRIIQWLEAEIIPDGWFSRGSNYSEILDKYFKNFDNGDSRLDSSEFLKFVEQNETAINITTYPDQENNKLLRGLCVDALIELSDENADWKLSFQEFLKCLNPSFNPPEKKCALEDETYADGAETEVDCNRCVCACGNWVCTAMTCDGKNQKGAQTQTEEEMTRYVQELQKHQETAEKTKRVSTKEI.

An N-terminal signal peptide occupies residues 1–18 (MWKRWLALALVAVAWVRA). Residues 28–51 (ICANVFCGAGRECAVTEKGEPTCL) enclose the Follistatin-like domain. Cystine bridges form between cysteine 29–cysteine 40, cysteine 34–cysteine 50, cysteine 52–cysteine 82, cysteine 56–cysteine 75, and cysteine 64–cysteine 96. The 53-residue stretch at 46–98 (GEPTCLCIEQCKPHKRPVCGSNGKTYLNHCELHRDACLTGSKIQVDYDGHCKE) folds into the Kazal-like domain. Residue asparagine 142 is glycosylated (N-linked (GlcNAc...) asparagine). The EF-hand 1 domain maps to 142–176 (NYSEILDKYFKNFDNGDSRLDSSEFLKFVEQNETA). Serine 163 is modified (phosphoserine). Residues asparagine 173 and asparagine 178 are each glycosylated (N-linked (GlcNAc...) asparagine). One can recognise an EF-hand 2 domain in the interval 191 to 226 (LRGLCVDALIELSDENADWKLSFQEFLKCLNPSFNP). The VWFC domain maps to 231–285 (CALEDETYADGAETEVDCNRCVCACGNWVCTAMTCDGKNQKGAQTQTEEEMTRYV).

In terms of assembly, homodimer. Interacts with SCN10A. Interacts with DIP2A; DIP2A may act as a cell surface receptor for FSTL1. Interacts with BMP4. Interacts with CD14; this interaction promotes TL4-mediated signaling cascade.

The protein resides in the secreted. In terms of biological role, secreted glycoprotein that is involved in various physiological processes, such as angiogenesis, regulation of the immune response, cell proliferation and differentiation. Plays a role in the development of the central nervous system, skeletal system, lungs, and ureter. Promotes endothelial cell survival, migration and differentiation into network structures in an AKT-dependent manner. Also promotes survival of cardiac myocytes. Initiates various signaling cascades by activating different receptors on the cell surface such as DIP2A, TLR4 or BMP receptors. The protein is Follistatin-related protein 1 (FSTL1) of Pongo abelii (Sumatran orangutan).